The following is a 171-amino-acid chain: Phosphinothricin N-acetyltransferase (171 aa).

The region spanning 7 to 171 (VQVRPGVEED…WDVAWYERPL (165 aa)) is the N-acetyltransferase domain. Residues 94-96 (VYV), 102-107 (GRGIGS), and Asn-133 contribute to the acetyl-CoA site.

This sequence belongs to the acetyltransferase family. PAT/BAR subfamily.

It carries out the reaction phosphinothricin + acetyl-CoA = N-acetylphosphinothricin + CoA + H(+). Its function is as follows. Inactivates phosphinothricin (PPT) by transfer of an acetyl group from acetyl CoA. The physiological substrate could be a structurally related compound. The protein is Phosphinothricin N-acetyltransferase of Streptomyces coelicolor (strain ATCC BAA-471 / A3(2) / M145).